Reading from the N-terminus, the 157-residue chain is Cyclic pyranopterin monophosphate synthase (157 aa).

Residues Met74 to His76 and Met112 to Glu113 each bind substrate. Residue Asp127 is part of the active site.

This sequence belongs to the MoaC family. In terms of assembly, homohexamer; trimer of dimers.

The enzyme catalyses (8S)-3',8-cyclo-7,8-dihydroguanosine 5'-triphosphate = cyclic pyranopterin phosphate + diphosphate. Its pathway is cofactor biosynthesis; molybdopterin biosynthesis. Its function is as follows. Catalyzes the conversion of (8S)-3',8-cyclo-7,8-dihydroguanosine 5'-triphosphate to cyclic pyranopterin monophosphate (cPMP). The sequence is that of Cyclic pyranopterin monophosphate synthase from Campylobacter jejuni subsp. jejuni serotype O:23/36 (strain 81-176).